Consider the following 276-residue polypeptide: Diaminopimelate epimerase (276 aa).

3 residues coordinate substrate: asparagine 13, glutamine 46, and asparagine 66. Cysteine 75 acts as the Proton donor in catalysis. Substrate is bound by residues 76 to 77, asparagine 159, asparagine 192, and 210 to 211; these read GN and ER. The Proton acceptor role is filled by cysteine 219. Residue 220 to 221 coordinates substrate; it reads GT.

The protein belongs to the diaminopimelate epimerase family. In terms of assembly, homodimer.

It is found in the cytoplasm. It carries out the reaction (2S,6S)-2,6-diaminopimelate = meso-2,6-diaminopimelate. It participates in amino-acid biosynthesis; L-lysine biosynthesis via DAP pathway; DL-2,6-diaminopimelate from LL-2,6-diaminopimelate: step 1/1. Catalyzes the stereoinversion of LL-2,6-diaminopimelate (L,L-DAP) to meso-diaminopimelate (meso-DAP), a precursor of L-lysine and an essential component of the bacterial peptidoglycan. The protein is Diaminopimelate epimerase of Pseudoalteromonas translucida (strain TAC 125).